Here is a 157-residue protein sequence, read N- to C-terminus: Ubiquitin-like protein 4A (157 aa).

Residues 1–76 (MQLTVKALQG…LNLVVKPLEK (76 aa)) form the Ubiquitin-like domain. Lys-48 participates in a covalent cross-link: Glycyl lysine isopeptide (Lys-Gly) (interchain with G-Cter in ubiquitin). At Ser-90 the chain carries Phosphoserine. The tract at residues 96–138 (WQLISKVLARHFSIGDASRVLEQLQRDYDRSLSRLTLDDIERL) is required and sufficient for interaction with BAG6.

Component of the BAG6/BAT3 complex, at least composed of BAG6, UBL4A and GET4/TRC35. Interacts with BAG6; the interaction is direct and required for UBL4A protein stability. Interacts with USP13; may be indirect via BAG6. Post-translationally, polyubiquitinated. Ubiquitination by AMFR and deubiquitination by USP13 may regulate the interaction between the BAG6/BAT complex and SGTA and therefore may regulate client proteins fate.

The protein localises to the cytoplasm. It localises to the cytosol. It is found in the nucleus. In terms of biological role, as part of a cytosolic protein quality control complex, the BAG6/BAT3 complex, maintains misfolded and hydrophobic patches-containing proteins in a soluble state and participates in their proper delivery to the endoplasmic reticulum or alternatively can promote their sorting to the proteasome where they undergo degradation. The BAG6/BAT3 complex is involved in the post-translational delivery of tail-anchored/type II transmembrane proteins to the endoplasmic reticulum membrane. Recruited to ribosomes, it interacts with the transmembrane region of newly synthesized tail-anchored proteins and together with SGTA and ASNA1 mediates their delivery to the endoplasmic reticulum. Client proteins that cannot be properly delivered to the endoplasmic reticulum are ubiquitinated and sorted to the proteasome. Similarly, the BAG6/BAT3 complex also functions as a sorting platform for proteins of the secretory pathway that are mislocalized to the cytosol either delivering them to the proteasome for degradation or to the endoplasmic reticulum. The BAG6/BAT3 complex also plays a role in the endoplasmic reticulum-associated degradation (ERAD), a quality control mechanism that eliminates unwanted proteins of the endoplasmic reticulum through their retrotranslocation to the cytosol and their targeting to the proteasome. It maintains these retrotranslocated proteins in an unfolded yet soluble state condition in the cytosol to ensure their proper delivery to the proteasome. The protein is Ubiquitin-like protein 4A (Ubl4a) of Rattus norvegicus (Rat).